A 152-amino-acid polypeptide reads, in one-letter code: Phosphoribosyl-AMP cyclohydrolase (152 aa).

Aspartate 92 lines the Mg(2+) pocket. Cysteine 93 contacts Zn(2+). Aspartate 94 and aspartate 96 together coordinate Mg(2+). Zn(2+) is bound by residues cysteine 111 and cysteine 118.

It belongs to the PRA-CH family. Homodimer. Mg(2+) is required as a cofactor. Requires Zn(2+) as cofactor.

The protein localises to the cytoplasm. The catalysed reaction is 1-(5-phospho-beta-D-ribosyl)-5'-AMP + H2O = 1-(5-phospho-beta-D-ribosyl)-5-[(5-phospho-beta-D-ribosylamino)methylideneamino]imidazole-4-carboxamide. It functions in the pathway amino-acid biosynthesis; L-histidine biosynthesis; L-histidine from 5-phospho-alpha-D-ribose 1-diphosphate: step 3/9. Functionally, catalyzes the hydrolysis of the adenine ring of phosphoribosyl-AMP. The polypeptide is Phosphoribosyl-AMP cyclohydrolase (Sinorhizobium fredii (strain NBRC 101917 / NGR234)).